We begin with the raw amino-acid sequence, 228 residues long: PKHD-type hydroxylase RPE_4577 (228 aa).

Residues 78–180 form the Fe2OG dioxygenase domain; it reads TIFPPLFNRY…RIASFFWTQS (103 aa). Residues His-98, Asp-100, and His-161 each coordinate Fe cation. Residue Arg-171 coordinates 2-oxoglutarate.

Requires Fe(2+) as cofactor. It depends on L-ascorbate as a cofactor.

This Rhodopseudomonas palustris (strain BisA53) protein is PKHD-type hydroxylase RPE_4577.